A 122-amino-acid chain; its full sequence is UPF0102 protein ECH_0093 (122 aa).

This sequence belongs to the UPF0102 family.

This Ehrlichia chaffeensis (strain ATCC CRL-10679 / Arkansas) protein is UPF0102 protein ECH_0093.